Consider the following 156-residue polypeptide: ATP synthase subunit b (156 aa).

A helical membrane pass occupies residues 13–33 (AFIIFVWFCMKFVWPPLMNAI).

Belongs to the ATPase B chain family. In terms of assembly, F-type ATPases have 2 components, F(1) - the catalytic core - and F(0) - the membrane proton channel. F(1) has five subunits: alpha(3), beta(3), gamma(1), delta(1), epsilon(1). F(0) has three main subunits: a(1), b(2) and c(10-14). The alpha and beta chains form an alternating ring which encloses part of the gamma chain. F(1) is attached to F(0) by a central stalk formed by the gamma and epsilon chains, while a peripheral stalk is formed by the delta and b chains.

It localises to the cell inner membrane. F(1)F(0) ATP synthase produces ATP from ADP in the presence of a proton or sodium gradient. F-type ATPases consist of two structural domains, F(1) containing the extramembraneous catalytic core and F(0) containing the membrane proton channel, linked together by a central stalk and a peripheral stalk. During catalysis, ATP synthesis in the catalytic domain of F(1) is coupled via a rotary mechanism of the central stalk subunits to proton translocation. Its function is as follows. Component of the F(0) channel, it forms part of the peripheral stalk, linking F(1) to F(0). The protein is ATP synthase subunit b of Shewanella sediminis (strain HAW-EB3).